The chain runs to 174 residues: MTTIVSVRRNNQVVIAGDGQVSLGNTVMKGNAKKVRRLYHNKVLAGFAGGTADAFTLFERFEAKLEMHQGHLMKAAVEMAKDWRSDKMLRKLEALLAVADDTCSLIITGNGDVVQPENDLIAIGSGGNFAQSAATALLENTELTALEIAEKSLTIAGDICVFTNQFKTIEELNY.

Residue T2 is part of the active site. Na(+) is bound by residues G157, C160, and T163.

Belongs to the peptidase T1B family. HslV subfamily. As to quaternary structure, a double ring-shaped homohexamer of HslV is capped on each side by a ring-shaped HslU homohexamer. The assembly of the HslU/HslV complex is dependent on binding of ATP.

Its subcellular location is the cytoplasm. It catalyses the reaction ATP-dependent cleavage of peptide bonds with broad specificity.. Allosterically activated by HslU binding. Protease subunit of a proteasome-like degradation complex believed to be a general protein degrading machinery. The protein is ATP-dependent protease subunit HslV of Shewanella woodyi (strain ATCC 51908 / MS32).